Consider the following 172-residue polypeptide: Adenine phosphoribosyltransferase (172 aa).

It belongs to the purine/pyrimidine phosphoribosyltransferase family. As to quaternary structure, homodimer.

It is found in the cytoplasm. The catalysed reaction is AMP + diphosphate = 5-phospho-alpha-D-ribose 1-diphosphate + adenine. It participates in purine metabolism; AMP biosynthesis via salvage pathway; AMP from adenine: step 1/1. Catalyzes a salvage reaction resulting in the formation of AMP, that is energically less costly than de novo synthesis. In Clostridium tetani (strain Massachusetts / E88), this protein is Adenine phosphoribosyltransferase.